The sequence spans 231 residues: Tegument protein UL51 homolog (231 aa).

A lipid anchor (S-palmitoyl cysteine; by host) is attached at cysteine 12.

This sequence belongs to the herpesviridae UL51 family. As to quaternary structure, oligomerizes. Interacts with U75; this interaction mediates U75 incorporation to virions. In terms of processing, phosphorylated. Palmitoylation is necessary for Golgi localization.

The protein resides in the virion tegument. The protein localises to the host cytoplasm. It localises to the host Golgi apparatus. Plays several roles during the time course of infection, including egress of virus particles from the perinuclear space and secondary envelopment of cytoplasmic capsids that bud into specific trans-Golgi network (TGN)-derived membranes. This is Tegument protein UL51 homolog (U44) from Human herpesvirus 6B (strain Z29) (HHV-6 variant B).